The following is a 257-amino-acid chain: Type 2 phosphatidylinositol 4,5-bisphosphate 4-phosphatase (257 aa).

The span at 1-10 (MAADGVDERS) shows a compositional bias: basic and acidic residues. The disordered stretch occupies residues 1 to 34 (MAADGVDERSPLLSASHSGSVTPTAPPYLQDSSP). Polar residues predominate over residues 13–23 (LSASHSGSVTP). Phosphothreonine is present on Thr22. Residue Ser33 is modified to Phosphoserine. Cys107 is a catalytic residue. The CX5R motif motif lies at 107-113 (CKDTSRR). Transmembrane regions (helical) follow at residues 192 to 212 (CCAYITIGMMCIFIGIGLTVG) and 227 to 247 (WAIAYLLGLVCLIRACYWGAI).

The protein resides in the late endosome membrane. Its subcellular location is the lysosome membrane. It localises to the cytoplasmic vesicle. The protein localises to the phagosome membrane. It is found in the cell membrane. The enzyme catalyses a 1,2-diacyl-sn-glycero-3-phospho-(1D-myo-inositol-4,5-bisphosphate) + H2O = a 1,2-diacyl-sn-glycero-3-phospho-(1D-myo-inositol-5-phosphate) + phosphate. Catalyzes the hydrolysis of phosphatidylinositol-4,5-bisphosphate (PtdIns-4,5-P2) to phosphatidylinositol-4-phosphate (PtdIns-4-P). Does not hydrolyze phosphatidylinositol 3,4,5-trisphosphate, phosphatidylinositol 3,4-bisphosphate, inositol 3,5-bisphosphate, inositol 3,4-bisphosphate, phosphatidylinositol 5-monophosphate, phosphatidylinositol 4-monophosphate and phosphatidylinositol 3-monophosphate. Negatively regulates the phagocytosis of large particles by reducing phagosomal phosphatidylinositol 4,5-bisphosphate accumulation during cup formation. This Bos taurus (Bovine) protein is Type 2 phosphatidylinositol 4,5-bisphosphate 4-phosphatase.